A 335-amino-acid chain; its full sequence is tRNA N6-adenosine threonylcarbamoyltransferase (335 aa).

Residues histidine 109, histidine 113, and tyrosine 130 each coordinate a divalent metal cation. Substrate contacts are provided by residues 130–134 (YVSGG), aspartate 162, glycine 177, glutamate 181, and asparagine 266. Residue aspartate 294 coordinates a divalent metal cation.

The protein belongs to the KAE1 / TsaD family. In terms of assembly, component of the EKC/KEOPS complex composed of at least GON7, TP53RK, TPRKB, OSGEP and LAGE3; the whole complex dimerizes. A divalent metal cation serves as cofactor.

It localises to the cytoplasm. Its subcellular location is the nucleus. The enzyme catalyses L-threonylcarbamoyladenylate + adenosine(37) in tRNA = N(6)-L-threonylcarbamoyladenosine(37) in tRNA + AMP + H(+). Component of the EKC/KEOPS complex that is required for the formation of a threonylcarbamoyl group on adenosine at position 37 (t(6)A37) in tRNAs that read codons beginning with adenine. The complex is probably involved in the transfer of the threonylcarbamoyl moiety of threonylcarbamoyl-AMP (TC-AMP) to the N6 group of A37. OSGEP likely plays a direct catalytic role in this reaction, but requires other protein(s) of the complex to fulfill this activity. In Rattus norvegicus (Rat), this protein is tRNA N6-adenosine threonylcarbamoyltransferase (Osgep).